A 514-amino-acid polypeptide reads, in one-letter code: RNA-binding region-containing protein 3 (514 aa).

Positions 1–26 (MAGPEPPMPLSRGGPGSASLSPPRGD) are disordered. Position 21 is a phosphoserine (S21). The RRM 1 domain occupies 27 to 102 (RTLLVRHLPA…HTLVVEFAKE (76 aa)). Disordered regions lie at residues 106-133 (VHSP…EKKE), 213-282 (MPLH…VRKK), and 337-363 (ETQP…FGKI). S108 is modified (phosphoserine). The segment covering 115–133 (TEKKKRLDDTVENDKEKKE) has biased composition (basic and acidic residues). The span at 217 to 230 (APLPPTSPQPPEEP) shows a compositional bias: pro residues. Position 349 is a phosphoserine (S349). One can recognise an RRM 2 domain in the interval 418-501 (CRIYVKNLAR…KPMVVQFARS (84 aa)).

Component of the U11/U12 snRNPs that are part of the U12-type spliceosome. Found in a complex with m(7)G-capped U12 snRNA. Interacts with PDCD7.

Its subcellular location is the nucleus. In terms of biological role, participates in pre-mRNA U12-dependent splicing, performed by the minor spliceosome which removes U12-type introns. U12-type introns comprises less than 1% of all non-coding sequences. Binds to the 3'-stem-loop of m(7)G-capped U12 snRNA. This chain is RNA-binding region-containing protein 3 (Rnpc3), found in Mus musculus (Mouse).